A 206-amino-acid polypeptide reads, in one-letter code: High frequency lysogenization protein HflD homolog (206 aa).

The protein belongs to the HflD family.

Its subcellular location is the cytoplasm. The protein localises to the cell inner membrane. The sequence is that of High frequency lysogenization protein HflD homolog from Ectopseudomonas mendocina (strain ymp) (Pseudomonas mendocina).